Reading from the N-terminus, the 833-residue chain is MTFYDHTAIEPKWQAFWADNHTFKTGTDASKPKFYALDMFPYPSGAGLHVGHPEGYTATDILSRFKRAQGHNVLHPMGWDAFGLPAEQYAMDTGNDPAEFTAENIANFKRQINALGFSYDWDREVNTTDPNYYKWTQWIFTKLYEKGLAYEAEVPVNWVEELGTAIANEEVLPDGTSERGGYPVVRKPMRQWMLKITAYAERLLEDLEEVDWPESIKDMQRNWIDKSTGANVTFKVKDTDKDFTVFTTRPDTLFGATYAVLAPEHALVDAITTADQAEAVADYKRQASLKSDLARTDLAKEKTGVWTGSYAINPVNGNEMPVWIADYVLASYGTGAIMAVPAHDERDWEFAKQFNLDIIPVLEGGNVEEAAFTEDGLHINSDFLDGLDKASAIAKMVEWLEAEGVGNEKVTYRLRDWLFSRQRYWGEPIPIIHWEDGTSTAVPESELPLVLPVTKDIRPSGTGESPLANVTDWLEVTREDGVKGRRETNTMPQWAGSSWYYLRYIDPHNTEKLADEELLKQWLPVDIYVGGAEHAVLHLLYARFWHKVLYDLGVVPTKEPFQKLFNQGMILGTSYRDSRGALVATDKVEKRDGSFFHVETGEELEQAPAKMSKSLKNVVNPDDVVEQYGADTLRVYEMFMGPLDASIAWSEEGLEGSRKFLDRVYRLITTKEITEENSGALDKVYNETVKAVTEQVDQMKFNTAIAQLMVFVNAANKEDKLFSDYAKGFVQLIAPFAPHLGEELWQALTASGESISYVPWPSYDESKLVENDVEIVVQIKGKVKAKLVVAKDLSREELQEVALANEKVQAEIAGKDIIKVIAVPNKLVNIVIK.

Residues 41–52 (PYPSGAGLHVGH) carry the 'HIGH' region motif. The short motif at 610–614 (KMSKS) is the 'KMSKS' region element. An ATP-binding site is contributed by Lys-613.

This sequence belongs to the class-I aminoacyl-tRNA synthetase family.

Its subcellular location is the cytoplasm. It carries out the reaction tRNA(Leu) + L-leucine + ATP = L-leucyl-tRNA(Leu) + AMP + diphosphate. The protein is Leucine--tRNA ligase of Streptococcus pyogenes serotype M4 (strain MGAS10750).